Here is a 372-residue protein sequence, read N- to C-terminus: MTTAKINLLDFDRKGLRAFFSEELGEKAFRADQVMKWMYHFGCDDFDQMNNINKKLREKLKNKCEIRAPYVSEAQHSSDGTIKWAMKVGDQDVETVYIPDGDRATLCVSSQVGCALECKFCSTAQQGFNRNLKVSEIVGQIWRAAREIGLEKETGRRPITNVVMMGMGEPLLNMKNLIPALEIMLDDLGFALSKRRVTVSTSGVVSGLDQMTGKIDVALAISLHAPTDELRSQIMPINDRWDIDAFLASVRRYIASSNANRGRVTVEYVLLDHVNDDMDHARQLAELLKDTPAKINLIPFNPYPGSPYKKPSNSRIDRFMKTLMEYDYTVTIRKTRGDDIDAACGQLVGDVIDRTKRTKVKQQGEAIPVKTV.

E94 functions as the Proton acceptor in the catalytic mechanism. A Radical SAM core domain is found at 100–339; sequence DGDRATLCVS…VTIRKTRGDD (240 aa). C107 and C344 are joined by a disulfide. [4Fe-4S] cluster-binding residues include C114, C118, and C121. S-adenosyl-L-methionine is bound by residues 168 to 169, S200, 222 to 224, and N301; these read GE and SLH. Residue C344 is the S-methylcysteine intermediate of the active site.

It belongs to the radical SAM superfamily. RlmN family. [4Fe-4S] cluster serves as cofactor.

It localises to the cytoplasm. It carries out the reaction adenosine(2503) in 23S rRNA + 2 reduced [2Fe-2S]-[ferredoxin] + 2 S-adenosyl-L-methionine = 2-methyladenosine(2503) in 23S rRNA + 5'-deoxyadenosine + L-methionine + 2 oxidized [2Fe-2S]-[ferredoxin] + S-adenosyl-L-homocysteine. It catalyses the reaction adenosine(37) in tRNA + 2 reduced [2Fe-2S]-[ferredoxin] + 2 S-adenosyl-L-methionine = 2-methyladenosine(37) in tRNA + 5'-deoxyadenosine + L-methionine + 2 oxidized [2Fe-2S]-[ferredoxin] + S-adenosyl-L-homocysteine. Its function is as follows. Specifically methylates position 2 of adenine 2503 in 23S rRNA and position 2 of adenine 37 in tRNAs. m2A2503 modification seems to play a crucial role in the proofreading step occurring at the peptidyl transferase center and thus would serve to optimize ribosomal fidelity. The chain is Dual-specificity RNA methyltransferase RlmN from Aliivibrio fischeri (strain MJ11) (Vibrio fischeri).